Reading from the N-terminus, the 145-residue chain is D-aminoacyl-tRNA deacylase (145 aa).

The Gly-cisPro motif, important for rejection of L-amino acids signature appears at 137–138; the sequence is GP.

It belongs to the DTD family. As to quaternary structure, homodimer.

The protein localises to the cytoplasm. It catalyses the reaction glycyl-tRNA(Ala) + H2O = tRNA(Ala) + glycine + H(+). It carries out the reaction a D-aminoacyl-tRNA + H2O = a tRNA + a D-alpha-amino acid + H(+). Functionally, an aminoacyl-tRNA editing enzyme that deacylates mischarged D-aminoacyl-tRNAs. Also deacylates mischarged glycyl-tRNA(Ala), protecting cells against glycine mischarging by AlaRS. Acts via tRNA-based rather than protein-based catalysis; rejects L-amino acids rather than detecting D-amino acids in the active site. By recycling D-aminoacyl-tRNA to D-amino acids and free tRNA molecules, this enzyme counteracts the toxicity associated with the formation of D-aminoacyl-tRNA entities in vivo and helps enforce protein L-homochirality. The chain is D-aminoacyl-tRNA deacylase from Lactobacillus helveticus (strain DPC 4571).